A 159-amino-acid chain; its full sequence is 6,7-dimethyl-8-ribityllumazine synthase (159 aa).

5-amino-6-(D-ribitylamino)uracil is bound by residues phenylalanine 22, 57 to 59, and 81 to 83; these read TYE and TII. 86 to 87 is a binding site for (2S)-2-hydroxy-3-oxobutyl phosphate; that stretch reads ST. Residue histidine 89 is the Proton donor of the active site. Methionine 114 contacts 5-amino-6-(D-ribitylamino)uracil. Position 128 (arginine 128) interacts with (2S)-2-hydroxy-3-oxobutyl phosphate.

It belongs to the DMRL synthase family. Forms an icosahedral capsid composed of 60 subunits, arranged as a dodecamer of pentamers.

It catalyses the reaction (2S)-2-hydroxy-3-oxobutyl phosphate + 5-amino-6-(D-ribitylamino)uracil = 6,7-dimethyl-8-(1-D-ribityl)lumazine + phosphate + 2 H2O + H(+). It functions in the pathway cofactor biosynthesis; riboflavin biosynthesis; riboflavin from 2-hydroxy-3-oxobutyl phosphate and 5-amino-6-(D-ribitylamino)uracil: step 1/2. Catalyzes the formation of 6,7-dimethyl-8-ribityllumazine by condensation of 5-amino-6-(D-ribitylamino)uracil with 3,4-dihydroxy-2-butanone 4-phosphate. This is the penultimate step in the biosynthesis of riboflavin. The chain is 6,7-dimethyl-8-ribityllumazine synthase from Buchnera aphidicola subsp. Schizaphis graminum (strain Sg).